Reading from the N-terminus, the 389-residue chain is Large envelope protein (389 aa).

Met-1 is modified (N-acetylmethionine). The N-myristoyl glycine; by host moiety is linked to residue Gly-2. The pre-S1 stretch occupies residues 2-108; the sequence is GTNLSVPNPL…PPLRDTHPQA (107 aa). The tract at residues 2–163 is pre-S; sequence GTNLSVPNPL…LSKTGDPVPN (162 aa). Residues 2–170 are Virion surface; in external conformation-facing; the sequence is GTNLSVPNPL…VPNMENIASG (169 aa). The Intravirion; in internal conformation portion of the chain corresponds to 2 to 242; that stretch reads GTNLSVPNPL…PGYRWMCLRR (241 aa). The interval 73 to 107 is disordered; it reads ILTSVPAAPPPASTNRQSGRQPTPLSPPLRDTHPQ. The span at 85–95 shows a compositional bias: polar residues; sequence STNRQSGRQPT. The segment at 109-163 is pre-S2; it reads MQWNSTTFHQTLQDPRVRALYFPAGGSSSGTVSPAQNTVSAISSILSKTGDPVPN. Residues 171 to 191 traverse the membrane as a helical segment; sequence LLGPLLVLQAGFFLLTKILTI. Topologically, residues 192–242 are intravirion; in external conformation; the sequence is PQSLDSWWTSLNFLGGTPVCLGQNSQSQISSHSPTCCPPICPGYRWMCLRR. The chain crosses the membrane as a helical span at residues 243-263; sequence FIIFLCILLLCLIFLLVLLDY. The Virion surface segment spans residues 264-337; the sequence is QGMLPVCPLI…WASVRFSWLS (74 aa). Asn-309 carries N-linked (GlcNAc...) asparagine; by host glycosylation. The helical transmembrane segment at 338–358 threads the bilayer; the sequence is LLVPFVQWFVGLSPTVWLSVI. The Intravirion portion of the chain corresponds to 359-364; that stretch reads WMMWYW. The chain crosses the membrane as a helical span at residues 365–387; it reads GPSLYNILSPFMPLLPIFFCLWV. Residues 388–389 are Virion surface-facing; it reads YI.

Belongs to the orthohepadnavirus major surface antigen family. In terms of assembly, interacts (via its myristoylated pre-S1 region) with the host SLC10A1/NTCP; this interaction is essential for viral entry. In its internal form (Li-HBsAg), interacts with the capsid protein and with the isoform S. Interacts with host chaperone CANX. As to quaternary structure, associates with host chaperone CANX through its pre-S2 N glycan; this association may be essential for isoform M proper secretion. In terms of assembly, interacts with isoform L. Interacts with the antigens of satellite virus HDV (HDVAgs); this interaction is required for encapsidation of HDV genomic RNA. Post-translationally, isoform M is N-terminally acetylated by host at a ratio of 90%, and N-glycosylated by host at the pre-S2 region. In terms of processing, myristoylated; this modification is essential for its interaction with the host protein SLC10A1/NTCP.

It localises to the virion membrane. In terms of biological role, the large envelope protein exists in two topological conformations, one which is termed 'external' or Le-HBsAg and the other 'internal' or Li-HBsAg. In its external conformation the protein attaches the virus to cell receptors and thereby initiating infection. This interaction determines the species specificity and liver tropism. This attachment induces virion internalization predominantly through caveolin-mediated endocytosis. The large envelope protein also assures fusion between virion membrane and endosomal membrane. In its internal conformation the protein plays a role in virion morphogenesis and mediates the contact with the nucleocapsid like a matrix protein. The middle envelope protein plays an important role in the budding of the virion. It is involved in the induction of budding in a nucleocapsid independent way. In this process the majority of envelope proteins bud to form subviral lipoprotein particles of 22 nm of diameter that do not contain a nucleocapsid. This Hepatitis B virus genotype B1 subtype adw (isolate Japan/pJDW233/1988) (HBV-B) protein is Large envelope protein.